The chain runs to 329 residues: Ribosomal RNA small subunit methyltransferase H (329 aa).

S-adenosyl-L-methionine-binding positions include 47-49, Asp67, Phe93, Asp115, and Gln122; that span reads GGH.

Belongs to the methyltransferase superfamily. RsmH family.

It is found in the cytoplasm. It carries out the reaction cytidine(1402) in 16S rRNA + S-adenosyl-L-methionine = N(4)-methylcytidine(1402) in 16S rRNA + S-adenosyl-L-homocysteine + H(+). In terms of biological role, specifically methylates the N4 position of cytidine in position 1402 (C1402) of 16S rRNA. This is Ribosomal RNA small subunit methyltransferase H from Blochmanniella pennsylvanica (strain BPEN).